Here is a 445-residue protein sequence, read N- to C-terminus: tRNA-2-methylthio-N(6)-dimethylallyladenosine synthase (445 aa).

The MTTase N-terminal domain maps to 4-121 (NKIYIKTWGC…LPNMIQEVKK (118 aa)). Cys-13, Cys-50, Cys-84, Cys-158, Cys-162, and Cys-165 together coordinate [4Fe-4S] cluster. The region spanning 144–376 (RKPKVTAFVS…QTLIRNNTTM (233 aa)) is the Radical SAM core domain. Residues 379–442 (QKMLGSIQSV…PNSLRGSYEK (64 aa)) enclose the TRAM domain.

This sequence belongs to the methylthiotransferase family. MiaB subfamily. In terms of assembly, monomer. Requires [4Fe-4S] cluster as cofactor.

It localises to the cytoplasm. The enzyme catalyses N(6)-dimethylallyladenosine(37) in tRNA + (sulfur carrier)-SH + AH2 + 2 S-adenosyl-L-methionine = 2-methylsulfanyl-N(6)-dimethylallyladenosine(37) in tRNA + (sulfur carrier)-H + 5'-deoxyadenosine + L-methionine + A + S-adenosyl-L-homocysteine + 2 H(+). Functionally, catalyzes the methylthiolation of N6-(dimethylallyl)adenosine (i(6)A), leading to the formation of 2-methylthio-N6-(dimethylallyl)adenosine (ms(2)i(6)A) at position 37 in tRNAs that read codons beginning with uridine. The sequence is that of tRNA-2-methylthio-N(6)-dimethylallyladenosine synthase from Buchnera aphidicola subsp. Baizongia pistaciae (strain Bp).